A 274-amino-acid chain; its full sequence is MPKVFLVKRRSPGVSVRSWDELPDDKRADTYIPVSLGCLLRDPPEDCRSDGGSSSGCSSSAGEPGGAESSSSPRAPEPETPELHDAQGTDGHLAAMQRPVARSKIKFTTGTCDNSVIHNCDLCGKSFRLQRMLNRHLKCHNQVKRHLCTFCGKGFNDTFDLKRHVRTHTGIRPYKCEVCNKAFTQRCSLESHLKKIHGVQQQYAYKQRRDKLYVCEDCGYTGPTQEDLYLHVNSDHPGSTFLKKTSKKLAALMQNKLTSPLQENSTLSEEEEKK.

Positions 1–11 (MPKVFLVKRRS) are enriched in basic residues. A disordered region spans residues 1–88 (MPKVFLVKRR…ETPELHDAQG (88 aa)). The span at 18–29 (SWDELPDDKRAD) shows a compositional bias: basic and acidic residues. Residues 50–74 (DGGSSSGCSSSAGEPGGAESSSSPR) are compositionally biased toward low complexity. C2H2-type zinc fingers lie at residues 118–140 (HNCDLCGKSFRLQRMLNRHLKCH), 146–168 (HLCTFCGKGFNDTFDLKRHVRTH), 174–197 (YKCEVCNKAFTQRCSLESHLKKIH), and 213–236 (YVCEDCGYTGPTQEDLYLHVNSDH). S268 carries the phosphoserine modification.

It belongs to the krueppel C2H2-type zinc-finger protein family. As to quaternary structure, interacts (via zinc-finger domains) with CEBPA (via bZIP domain); the interaction inhibits the transcription factor activity of CEBPA and is required to repress adipogenesis. As to expression, expressed highly in testis, specifically in spermatocytes. Expressed also in skin and at lower levels in the ovary. Expressed in adipose tissues. Expression is lower than in testis and a relatively higher expression level is detected in the stromal vascular fraction (SVF) than in fat cells themselves.

The protein resides in the nucleus. In terms of biological role, zinc-finger transcription repressor factor. Plays a critical role in maintaining the identity of epithelial lineages by suppressing epithelial-to mesenchymal transition (EMT) mainly through the repression of ZEB1, an EMT inducer. Positively regulates neuronal differentiation. Suppresses cell cycling and terminal differentiation of keratinocytes by directly repressing MYC and NOTCH1. Important for the correct development of primordial germ cells in embryos. Plays dual functions in thermogenesis and adipogenesis to maintain energy balance. Essential for brown/beige adipose tissue-mediated thermogenesis, is necessary for the development of brown adipocytes. In white adipose tissues, limits adipogenesis by blocking CEBPA binding to its transcriptional targets and inhibiting its transcription factor activity. In Mus musculus (Mouse), this protein is Transcription factor Ovo-like 2.